The following is a 701-amino-acid chain: MNPVIKKFQFGQSTVTLETGRIARQATGAVLVTVDNDVTVLVTVVGAKQADPGKGFFPLSVHYQEKTYAAGKIPGGFFKREGRPSEKETLTSRLIDRPIRPLFPEGFMNEVQVVCTVVSTSKKTDPDIAAMIGTSAALAISGIPFEGPIGAARVAFHESTGYLLNPTYEQLAASSLDMVVAGTSDAVLMVESEAQELTEDQMLGAVLFAHDEFQAVIQAVKELAAEAGKPTWDWKPAVANTELFNAIRAEFGEAVSQGYTITVKADRYARLGELRDQAIAKFSGEEGQPSASEVKEIFGEIEYRTVRENIVNGKPRIDGRDTKTVRPLNIEVGVLPKTHGSALFTRGETQALVVATLGTARDAQLLDTLEGEKKDPFMLHYNFPPFSVGECGRMGGAGRREIGHGRLARRSVQAMLPAADVFPYTIRVVSEITESNGSSSMASVCGASLALMDAGVPMKAPVAGIAMGLVKEGEKFAVLTDILGDEDHLGDMDFKVAGTAKGVTALQMDIKINGITEEIMEIALGQALEARLNILGQMNQIIGQSRTELSANAPTMIAMKIDTDKIRDVIGKGGATIRAICEETKASIDIEDDGSIKIFGETKEAAEAARQRVLGITAEAEIGKIYVGKVERIVDFGAFVNILPGKDGLVHISMLSDARVEKVTDILKEGQEVEVLVLDVDNRGRIKLSIKDVAAAKASGV.

Residues Asp-487 and Asp-493 each contribute to the Mg(2+) site. Positions 554–613 constitute a KH domain; the sequence is PTMIAMKIDTDKIRDVIGKGGATIRAICEETKASIDIEDDGSIKIFGETKEAAEAARQRV. The S1 motif domain occupies 623 to 691; sequence GKIYVGKVER…NRGRIKLSIK (69 aa).

Belongs to the polyribonucleotide nucleotidyltransferase family. As to quaternary structure, component of the RNA degradosome, which is a multiprotein complex involved in RNA processing and mRNA degradation. Mg(2+) serves as cofactor.

Its subcellular location is the cytoplasm. The catalysed reaction is RNA(n+1) + phosphate = RNA(n) + a ribonucleoside 5'-diphosphate. Its function is as follows. Involved in mRNA degradation. Catalyzes the phosphorolysis of single-stranded polyribonucleotides processively in the 3'- to 5'-direction. The polypeptide is Polyribonucleotide nucleotidyltransferase (Pseudomonas putida (strain W619)).